Here is a 353-residue protein sequence, read N- to C-terminus: Aromatic amino acid aminotransferase (353 aa).

Position 217 is an N6-(pyridoxal phosphate)lysine (lysine 217).

It belongs to the class-II pyridoxal-phosphate-dependent aminotransferase family. As to quaternary structure, homodimer. Pyridoxal 5'-phosphate serves as cofactor.

The enzyme catalyses an aromatic L-alpha-amino acid + 2-oxoglutarate = an aromatic oxo-acid + L-glutamate. Functionally, aminotransferase that catalyzes the conversion of aromatic amino acids and 2-oxoglutarate into corresponding aromatic oxo acids and L-glutamate. The protein is Aromatic amino acid aminotransferase of Mycobacterium bovis (strain ATCC BAA-935 / AF2122/97).